The following is a 35-amino-acid chain: Cytochrome b6-f complex subunit 5 (35 aa).

The chain crosses the membrane as a helical span at residues 5 to 25 (LLTGIVLGSIFITLLGLLAAA).

The protein belongs to the PetG family. As to quaternary structure, the 4 large subunits of the cytochrome b6-f complex are cytochrome b6, subunit IV (17 kDa polypeptide, PetD), cytochrome f and the Rieske protein, while the 4 small subunits are PetG, PetL, PetM and PetN. The complex functions as a dimer.

The protein localises to the plastid. It is found in the chloroplast thylakoid membrane. Functionally, component of the cytochrome b6-f complex, which mediates electron transfer between photosystem II (PSII) and photosystem I (PSI), cyclic electron flow around PSI, and state transitions. PetG is required for either the stability or assembly of the cytochrome b6-f complex. The protein is Cytochrome b6-f complex subunit 5 of Cyanidium caldarium (Red alga).